Here is a 577-residue protein sequence, read N- to C-terminus: Phosphoethanolamine transferase EptC (577 aa).

5 helical membrane-spanning segments follow: residues 17–37 (LGWA…IIYI), 44–64 (NGIR…FLFP), 69–89 (IIAA…LCYY), 119–139 (YFSL…VLLW), and 154–174 (VVSF…NTFI).

The protein belongs to the phosphoethanolamine transferase family. EptC/CptA subfamily. Forms a complex with an unidentified protein of approximately 36 kDa.

The protein resides in the cell inner membrane. Its pathway is bacterial outer membrane biogenesis; LPS core biosynthesis. Functionally, catalyzes the addition of a phosphoethanolamine moiety to the outer membrane lipopolysaccharide core. The chain is Phosphoethanolamine transferase EptC (eptC) from Escherichia coli (strain K12).